The following is a 96-amino-acid chain: MRVMVDQDLCGTSGQCVLTLPGTFRQREPDGVAEVCVATVPHALHAAVRLAASQCPVAAIRVIESDAGDGERASADPAPSPAEAERHAAKDQHNLG.

[3Fe-4S] cluster-binding residues include Cys-10, Cys-16, and Cys-55. Positions 67 to 96 (AGDGERASADPAPSPAEAERHAAKDQHNLG) are disordered. Basic and acidic residues predominate over residues 83–96 (EAERHAAKDQHNLG).

[3Fe-4S] cluster serves as cofactor.

Functionally, electron transport protein for the cytochrome systems. This is an uncharacterized protein from Bradyrhizobium diazoefficiens (strain JCM 10833 / BCRC 13528 / IAM 13628 / NBRC 14792 / USDA 110).